The following is a 372-amino-acid chain: Probable O-methyltransferase 2 (372 aa).

Residues Gly-216, Asp-259, and Lys-273 each coordinate S-adenosyl-L-methionine. His-277 functions as the Proton acceptor in the catalytic mechanism.

Belongs to the class I-like SAM-binding methyltransferase superfamily. Cation-independent O-methyltransferase family. COMT subfamily. In terms of assembly, homodimer. Expressed predominantly in root hairs.

In terms of biological role, O-methyltransferase of unknown substrate specificity. Not active on resorcinol, orcinol, guaiacol, eugenol, ferulic acid, p-coumaric acid, catechol, caffeic acid or monomethyl ethers of resorcinol or orcinol. The polypeptide is Probable O-methyltransferase 2 (OMT2) (Sorghum bicolor (Sorghum)).